Reading from the N-terminus, the 324-residue chain is IDS-like terpene synthase 2 (324 aa).

The Mg(2+) site is built by aspartate 77 and aspartate 81.

The protein belongs to the FPP/GGPP synthase family. It depends on Mg(2+) as a cofactor.

It carries out the reaction (2E)-geranyl diphosphate = (E)-beta-ocimene + diphosphate. The enzyme catalyses (2E,6E)-farnesyl diphosphate = (3E,6E)-alpha-farnesene + diphosphate. The catalysed reaction is (2E,6E,10E)-geranylgeranyl diphosphate = (E,E,E)-alpha-springene + diphosphate. In terms of biological role, terpene synthase that shows monoterpene synthase activity and produces (E)-beta-ocimene as a major product, using geranyl diphosphate (GPP) as substrate. Also shows sesquiterpene synthase activity as it is able to convert farnesyl diphosphate (FPP) into (E,E)-alpha-farnesene. Finally, TPS2 can convert geranylgeranyl diphosphate into (E,E,E)-alpha-springene. The chain is IDS-like terpene synthase 2 from Melampsora lini (Rust fungus).